We begin with the raw amino-acid sequence, 422 residues long: Glutamate-1-semialdehyde 2,1-aminomutase (422 aa).

At Lys-264 the chain carries N6-(pyridoxal phosphate)lysine.

Belongs to the class-III pyridoxal-phosphate-dependent aminotransferase family. HemL subfamily. In terms of assembly, homodimer. Requires pyridoxal 5'-phosphate as cofactor.

It localises to the cytoplasm. It catalyses the reaction (S)-4-amino-5-oxopentanoate = 5-aminolevulinate. The protein operates within porphyrin-containing compound metabolism; protoporphyrin-IX biosynthesis; 5-aminolevulinate from L-glutamyl-tRNA(Glu): step 2/2. The protein is Glutamate-1-semialdehyde 2,1-aminomutase of Clostridium acetobutylicum (strain ATCC 824 / DSM 792 / JCM 1419 / IAM 19013 / LMG 5710 / NBRC 13948 / NRRL B-527 / VKM B-1787 / 2291 / W).